Here is a 566-residue protein sequence, read N- to C-terminus: Transcription factor atf1 (566 aa).

The span at 1–42 (MSPSPVNTSTEPASVAAVSNGNATASSTQVPENNQSDSFAPP) shows a compositional bias: polar residues. 4 disordered regions span residues 1 to 83 (MSPS…FVGS), 96 to 117 (SFGS…PSLS), 315 to 345 (QQQT…PQAS), and 357 to 479 (SQQF…KSFL). Residues 43 to 53 (SNNSQQNQQSS) are compositionally biased toward low complexity. Polar residues-rich tracts occupy residues 65-76 (ANANPADQSDGV) and 97-106 (FGSTASVGQG). Residues 107–117 (NPSLNRNPSLS) show a composition bias toward low complexity. Polar residues-rich tracts occupy residues 379–412 (TLRQ…TANS) and 421–460 (TDYS…YSKG). Basic and acidic residues predominate over residues 466–479 (SKNETDEEKRKSFL). Positions 472–535 (EEKRKSFLER…VSLKTLLIAH (64 aa)) constitute a bZIP domain. The segment at 474–503 (KRKSFLERNRQAALKCRQRKKQWLSNLQAK) is basic motif. The leucine-zipper stretch occupies residues 514-528 (LSAQVSALREEIVSL).

It belongs to the bZIP family. In terms of assembly, heterodimer of pcr1/mts2 and atf1/mts1. In terms of processing, phosphorylated by sty1/spc1.

Its subcellular location is the nucleus. Functionally, transcription factor required for sexual development and entry into stationary phase. Binds and activates CRE sites (cAMP-response elements, also known as M26 meiotic recombination hotspots). This Schizosaccharomyces pombe (strain 972 / ATCC 24843) (Fission yeast) protein is Transcription factor atf1 (atf1).